The chain runs to 340 residues: Nuclear hormone receptor family member nhr-197 (340 aa).

Residues methionine 1–aspartate 75 constitute a DNA-binding region (nuclear receptor). 2 NR C4-type zinc fingers span residues cysteine 3 to cysteine 23 and cysteine 39 to cysteine 58. The NR LBD domain occupies lysine 98–asparagine 337.

Belongs to the nuclear hormone receptor family.

The protein localises to the nucleus. Its function is as follows. Orphan nuclear receptor. This is Nuclear hormone receptor family member nhr-197 (nhr-197) from Caenorhabditis elegans.